The following is a 381-amino-acid chain: Spindlin interactor and repressor of chromatin-binding protein (381 aa).

The segment at 42–73 is disordered; the sequence is RVTQQEKTPPPRPSPLEAGSDGCEEPKQQVSW. Lys48 is covalently cross-linked (Glycyl lysine isopeptide (Lys-Gly) (interchain with G-Cter in SUMO2)). Residues Ser121 and Ser148 each carry the phosphoserine modification. 3 disordered regions span residues 144 to 264, 283 to 320, and 339 to 381; these read AEQP…EVRH, QLRG…LRGT, and LQDW…GNGV. Glycyl lysine isopeptide (Lys-Gly) (interchain with G-Cter in SUMO2) cross-links involve residues Lys189 and Lys220. The span at 218–228 shows a compositional bias: basic and acidic residues; it reads RWKEPPGEEPV. Phosphoserine occurs at positions 248 and 251. A compositionally biased stretch (basic and acidic residues) spans 287-299; that stretch reads PDSKDSPKDREVA. Glycyl lysine isopeptide (Lys-Gly) (interchain with G-Cter in SUMO2) cross-links involve residues Lys290 and Lys294. Phosphoserine is present on residues Ser308 and Ser310. Lys374 participates in a covalent cross-link: Glycyl lysine isopeptide (Lys-Gly) (interchain with G-Cter in SUMO2).

As to quaternary structure, interacts with SPIN1, SPIN2A, SPIN2B, SPIN3 and SPIN4. Interacts with TCF7L2 in a SPIN1-dependent manner. Interacts with PARP1; promoting PARP1 ADP-ribosyltransferase activity.

Its subcellular location is the nucleus. It localises to the chromosome. Chromatin protein that stabilizes SPIN1 and enhances its association with histone H3 trimethylated at both 'Lys-4' and 'Lys-9' (H3K4me3K9me3). Positively regulates poly-ADP-ribosylation in response to DNA damage; acts by facilitating PARP1 ADP-ribosyltransferase activity. This is Spindlin interactor and repressor of chromatin-binding protein from Homo sapiens (Human).